The primary structure comprises 394 residues: Tryptophan synthase beta chain (394 aa).

An N6-(pyridoxal phosphate)lysine modification is found at Lys-90.

Belongs to the TrpB family. In terms of assembly, tetramer of two alpha and two beta chains. The cofactor is pyridoxal 5'-phosphate.

It catalyses the reaction (1S,2R)-1-C-(indol-3-yl)glycerol 3-phosphate + L-serine = D-glyceraldehyde 3-phosphate + L-tryptophan + H2O. It functions in the pathway amino-acid biosynthesis; L-tryptophan biosynthesis; L-tryptophan from chorismate: step 5/5. Its function is as follows. The beta subunit is responsible for the synthesis of L-tryptophan from indole and L-serine. This is Tryptophan synthase beta chain from Parabacteroides distasonis (strain ATCC 8503 / DSM 20701 / CIP 104284 / JCM 5825 / NCTC 11152).